We begin with the raw amino-acid sequence, 537 residues long: Cytochrome P450 86A8 (537 aa).

The chain crosses the membrane as a helical span at residues 3–23 (ISTALMILSAITAYFLWLTFI). Residue C458 coordinates heme.

It belongs to the cytochrome P450 family. Requires heme as cofactor. As to expression, expressed in leaves, stems, flowers and siliques. Expressed at low levels in roots.

It localises to the membrane. The enzyme catalyses an organic molecule + reduced [NADPH--hemoprotein reductase] + O2 = an alcohol + oxidized [NADPH--hemoprotein reductase] + H2O + H(+). Catalyzes the omega-hydroxylation of various fatty acids (FA). Acts on saturated and unsaturated fatty acids with chain lengths from C12 to C18. May be involved in the biosynthesis of cutin in the epidermis which prevents post-genital organ fusions. Hydroxylated FAs may be important for trichome differentiation, establishment of apical dominance and senescence. The polypeptide is Cytochrome P450 86A8 (CYP86A8) (Arabidopsis thaliana (Mouse-ear cress)).